The sequence spans 393 residues: Arginine biosynthesis bifunctional protein ArgJ (393 aa).

The substrate site is built by T142, K168, T179, E265, N388, and T393. T179 (nucleophile) is an active-site residue.

This sequence belongs to the ArgJ family. Heterotetramer of two alpha and two beta chains.

It is found in the cytoplasm. The catalysed reaction is N(2)-acetyl-L-ornithine + L-glutamate = N-acetyl-L-glutamate + L-ornithine. It carries out the reaction L-glutamate + acetyl-CoA = N-acetyl-L-glutamate + CoA + H(+). Its pathway is amino-acid biosynthesis; L-arginine biosynthesis; L-ornithine and N-acetyl-L-glutamate from L-glutamate and N(2)-acetyl-L-ornithine (cyclic): step 1/1. It functions in the pathway amino-acid biosynthesis; L-arginine biosynthesis; N(2)-acetyl-L-ornithine from L-glutamate: step 1/4. Its function is as follows. Catalyzes two activities which are involved in the cyclic version of arginine biosynthesis: the synthesis of N-acetylglutamate from glutamate and acetyl-CoA as the acetyl donor, and of ornithine by transacetylation between N(2)-acetylornithine and glutamate. The polypeptide is Arginine biosynthesis bifunctional protein ArgJ (Geobacter sulfurreducens (strain ATCC 51573 / DSM 12127 / PCA)).